We begin with the raw amino-acid sequence, 204 residues long: Glideosome-associated protein 45 (204 aa).

Residues 1–86 (MGNKCSRSKV…KEEIDYATQE (86 aa)) form a disordered region. G2 carries N-myristoyl glycine lipidation. The segment at 2-29 (GNKCSRSKVKEPKRKDIDELAERENLKK) is targets GAP45 to the cell membrane; however, dispensable for the formation of the glideosome complex and the association with the inner membrane complex. Basic and acidic residues predominate over residues 9 to 53 (KVKEPKRKDIDELAERENLKKQSEEIIEEKPEEVVEQVEETHEEP). A compositionally biased stretch (acidic residues) spans 54–73 (LEQEQELDEQKIEEEEEEPE). S89 carries the phosphoserine; by CPK10 modification. A Phosphoserine; by CPK10 and PKB modification is found at S103. Position 149 is a phosphoserine; by CPK10 (S149).

As to quaternary structure, component of the glideosome complex composed of GAP50, GAP45, MTIP and MyoA; the complex is formed during the late schizont stage and in merozoites. MyoA, MTIP and GAP45 probably form an initial complex in the cytoplasm which is then recruited to the outer face of the inner membrane complex via the interaction with GAP50. Interacts with GAP50; the interaction is independent of GAP45 phosphorylation status and can also occur independently of the formation of the glideosome complex. Phosphorylated at multiple sites. Phosphorylation increases during the schizont stage and peaks in segmented merozoites. May be phosphorylated by PKB. In schizonts, phosphorylated at Ser-89 and Ser-149 in response to phospholipase C-mediated calcium release. Phosphorylation at Ser-149 begins in early schizonts while phosphorylation at Ser-103 begins in late schizonts. Phosphorylation at Ser-89, Ser-103 and Ser-149 appears to be dispensable for GAP45 inner membrane complex localization or GAP45 inclusion in the glideosome complex. Phosphorylation is not required for interaction with GAP50; however, it may regulate the interaction with MTIP and MyoA. In terms of processing, N-myristoylated by NMT. N-myristoylation may contribute to the targeting of GAP45 to the inner membrane complex with the subsequent palmitoylation strengthening the interaction with the membrane. Post-translationally, palmitoylated. Palmitoylation appears to follow N-myristoylation and may strengthen the interaction with the inner membrane complex.

Its subcellular location is the inner membrane complex. Component of the glideosome complex, an inner membrane complex structure involved in parasite gliding motility and host cell invasion. During the asexual blood stage, required in schizonts to recruit MTIP and MyoA to the inner membrane complex where they assemble with GAP50 to form the glideosome complex. By regulating the formation of the glideosome, plays an essential role during merozoite invasion of host erythrocytes. This Plasmodium falciparum (isolate 3D7) protein is Glideosome-associated protein 45.